A 64-amino-acid chain; its full sequence is Probable cytochrome c oxidase subunit 5C-3 (64 aa).

Residues 15–34 traverse the membrane as a helical segment; sequence SVVKELVIGLTLGLAAGGLW.

The protein belongs to the cytochrome c oxidase subunit 5C family.

The protein localises to the mitochondrion inner membrane. In terms of biological role, this protein is one of the nuclear-coded polypeptide chains of cytochrome c oxidase, the terminal oxidase in mitochondrial electron transport. This is Probable cytochrome c oxidase subunit 5C-3 from Arabidopsis thaliana (Mouse-ear cress).